We begin with the raw amino-acid sequence, 236 residues long: Leucyl/phenylalanyl-tRNA--protein transferase (236 aa).

It belongs to the L/F-transferase family.

Its subcellular location is the cytoplasm. The enzyme catalyses N-terminal L-lysyl-[protein] + L-leucyl-tRNA(Leu) = N-terminal L-leucyl-L-lysyl-[protein] + tRNA(Leu) + H(+). It carries out the reaction N-terminal L-arginyl-[protein] + L-leucyl-tRNA(Leu) = N-terminal L-leucyl-L-arginyl-[protein] + tRNA(Leu) + H(+). The catalysed reaction is L-phenylalanyl-tRNA(Phe) + an N-terminal L-alpha-aminoacyl-[protein] = an N-terminal L-phenylalanyl-L-alpha-aminoacyl-[protein] + tRNA(Phe). Functionally, functions in the N-end rule pathway of protein degradation where it conjugates Leu, Phe and, less efficiently, Met from aminoacyl-tRNAs to the N-termini of proteins containing an N-terminal arginine or lysine. The chain is Leucyl/phenylalanyl-tRNA--protein transferase from Vibrio campbellii (strain ATCC BAA-1116).